Here is a 469-residue protein sequence, read N- to C-terminus: Neuraminidase (469 aa).

Residues 1–9 (MNPNQKIIT) lie on the Intravirion side of the membrane. A helical transmembrane segment spans residues 10 to 30 (IGSVSLTIATVCFLMQIAILV). The interval 11 to 33 (GSVSLTIATVCFLMQIAILVTTV) is involved in apical transport and lipid raft association. Over 31 to 469 (TTVTLHFRQY…DGADINLMPI (439 aa)) the chain is Virion surface. Residues 36–88 (HFRQYECDSPANNQVMPCEPTIIERNITEIVYLNNTTIEKEICPKLVEYRNWS) form a hypervariable stalk region region. 4 N-linked (GlcNAc...) asparagine; by host glycosylation sites follow: Asn-61, Asn-69, Asn-70, and Asn-86. The tract at residues 91–469 (QCKITGFAPF…DGADINLMPI (379 aa)) is head of neuraminidase. Disulfide bonds link Cys-92-Cys-417, Cys-124-Cys-129, Cys-183-Cys-230, Cys-232-Cys-237, Cys-278-Cys-291, Cys-280-Cys-289, Cys-318-Cys-337, and Cys-421-Cys-447. Arg-118 lines the substrate pocket. An N-linked (GlcNAc...) asparagine; by host glycan is attached at Asn-146. Asp-151 acts as the Proton donor/acceptor in catalysis. Substrate is bound at residue Arg-152. Residues Asn-200 and Asn-234 are each glycosylated (N-linked (GlcNAc...) asparagine; by host). Residue 276–277 (EE) participates in substrate binding. Arg-292 provides a ligand contact to substrate. Ca(2+) contacts are provided by Asp-293, Gly-297, and Asp-324. Residues 323–350 (GDTPRNNDRSSNSNCRNPNNERGNHGVK) form a disordered region. A compositionally biased stretch (low complexity) spans 331–343 (RSSNSNCRNPNNE). Arg-371 is a binding site for substrate. The N-linked (GlcNAc...) asparagine; by host glycan is linked to Asn-402. The active-site Nucleophile is Tyr-406.

The protein belongs to the glycosyl hydrolase 34 family. Homotetramer. Ca(2+) is required as a cofactor. Post-translationally, N-glycosylated.

The protein resides in the virion membrane. It localises to the host apical cell membrane. It carries out the reaction Hydrolysis of alpha-(2-&gt;3)-, alpha-(2-&gt;6)-, alpha-(2-&gt;8)- glycosidic linkages of terminal sialic acid residues in oligosaccharides, glycoproteins, glycolipids, colominic acid and synthetic substrates.. With respect to regulation, inhibited by the neuraminidase inhibitors zanamivir (Relenza) and oseltamivir (Tamiflu). These drugs interfere with the release of progeny virus from infected cells and are effective against all influenza strains. Resistance to neuraminidase inhibitors is quite rare. In terms of biological role, catalyzes the removal of terminal sialic acid residues from viral and cellular glycoconjugates. Cleaves off the terminal sialic acids on the glycosylated HA during virus budding to facilitate virus release. Additionally helps virus spread through the circulation by further removing sialic acids from the cell surface. These cleavages prevent self-aggregation and ensure the efficient spread of the progeny virus from cell to cell. Otherwise, infection would be limited to one round of replication. Described as a receptor-destroying enzyme because it cleaves a terminal sialic acid from the cellular receptors. May facilitate viral invasion of the upper airways by cleaving the sialic acid moieties on the mucin of the airway epithelial cells. Likely to plays a role in the budding process through its association with lipid rafts during intracellular transport. May additionally display a raft-association independent effect on budding. Plays a role in the determination of host range restriction on replication and virulence. Sialidase activity in late endosome/lysosome traffic seems to enhance virus replication. The protein is Neuraminidase of Aves (Human).